Consider the following 185-residue polypeptide: Ribosome-recycling factor (185 aa).

Belongs to the RRF family.

Its subcellular location is the cytoplasm. Responsible for the release of ribosomes from messenger RNA at the termination of protein biosynthesis. May increase the efficiency of translation by recycling ribosomes from one round of translation to another. The polypeptide is Ribosome-recycling factor (Pseudomonas aeruginosa (strain LESB58)).